A 37-amino-acid chain; its full sequence is MKVRASVKKMCDKCKVIKRRGIVRVICENKKHKQRQG.

It belongs to the bacterial ribosomal protein bL36 family.

This is Large ribosomal subunit protein bL36 from Aliarcobacter butzleri (strain RM4018) (Arcobacter butzleri).